Here is a 448-residue protein sequence, read N- to C-terminus: Serine/threonine-protein phosphatase 2A regulatory subunit B'' subunit gamma (448 aa).

2 consecutive EF-hand domains span residues 268-303 (PSAL…TLTC) and 336-371 (KEPA…IQEQ). Ca(2+) is bound by residues Asp-281, Asp-283, Asn-285, Met-287, and Glu-292.

It is found in the nucleus. It localises to the cytoplasm. In terms of biological role, possible role in the regulation of cell death. This chain is Serine/threonine-protein phosphatase 2A regulatory subunit B'' subunit gamma (ppp2r3c), found in Xenopus tropicalis (Western clawed frog).